A 708-amino-acid polypeptide reads, in one-letter code: Lactotransferrin (708 aa).

Positions Met-1–Ala-19 are cleaved as a signal peptide. Transferrin-like domains follow at residues Val-25–Glu-352 and Val-364–Lys-693. 2 cysteine pairs are disulfide-bonded: Cys-28–Cys-64 and Cys-38–Cys-55. Asp-79 contributes to the Fe cation binding site. Residue Lys-92 is part of the active site. A Fe cation-binding site is contributed by Tyr-111. 5 disulfides stabilise this stretch: Cys-134–Cys-217, Cys-176–Cys-192, Cys-179–Cys-202, Cys-189–Cys-200, and Cys-250–Cys-264. Hydrogencarbonate contacts are provided by Thr-136, Arg-140, Ala-142, and Gly-143. Residue Tyr-211 coordinates Fe cation. N-linked (GlcNAc...) (high mannose) asparagine glycosylation is present at Asn-252. His-272 contributes to the Fe cation binding site. Ser-278 acts as the Nucleophile in catalysis. Asn-300 is a glycosylation site (N-linked (GlcNAc...) (hybrid) asparagine). Disulfide bonds link Cys-367/Cys-399 and Cys-377/Cys-390. Residues Asp-414 and Tyr-452 each coordinate Fe cation. 8 cysteine pairs are disulfide-bonded: Cys-424–Cys-703, Cys-444–Cys-666, Cys-476–Cys-551, Cys-500–Cys-694, Cys-510–Cys-524, Cys-521–Cys-534, Cys-592–Cys-606, and Cys-644–Cys-649. Positions 478, 482, 484, and 485 each coordinate hydrogencarbonate. N-linked (GlcNAc...) (complex) asparagine; alternate glycosylation occurs at Asn-495. N-linked (GlcNAc...) (high mannose) asparagine; alternate glycosylation is present at Asn-495. Asn-495 carries N-linked (GlcNAc...) (hybrid) asparagine; alternate glycosylation. Residue Tyr-545 coordinates Fe cation. Asn-564 carries an N-linked (GlcNAc...) (high mannose) asparagine glycan. Residue His-614 coordinates Fe cation.

The protein belongs to the transferrin family. In terms of assembly, monomer. Found in a complex with LTF, CLU, EPPIN and SEMG1. Found in a complex with MPO and LTF; interacts directly with CP, allows Fe(3+) incorporation into LTF and activation of CP ferroxidase activity. Post-translationally, poly-N-acetyllactosaminic carbohydrate moiety seems to be needed for TLR4 activation.

It localises to the secreted. Its subcellular location is the cytoplasmic granule. Functionally, transferrins are iron binding transport proteins which can bind two Fe(3+) ions in association with the binding of an anion, usually bicarbonate. Its function is as follows. Major iron-binding and multifunctional protein found in exocrine fluids such as breast milk and mucosal secretions. Has antimicrobial activity, which depends on the extracellular cation concentration. Antimicrobial properties include bacteriostasis, which is related to its ability to sequester free iron and thus inhibit microbial growth, as well as direct bactericidal properties leading to the release of lipopolysaccharides from the bacterial outer membrane. Can also prevent bacterial biofilm development in P.aeruginosa infection. Has weak antifungal activity against C.albicans. Has anabolic, differentiating and anti-apoptotic effects on osteoblasts and can also inhibit osteoclastogenesis, possibly playing a role in the regulation of bone growth. Promotes binding of species C adenoviruses to epithelial cells, promoting adenovirus infection. Can inhibit papillomavirus infections. Stimulates the TLR4 signaling pathway leading to NF-kappa-B activation and subsequent pro-inflammatory cytokine production while also interfering with the lipopolysaccharide (LPS)-stimulated TLR4 signaling. Inhibits neutrophil granulocyte migration to sites of apoptosis, when secreted by apoptotic cells. Stimulates VEGFA-mediated endothelial cell migration and proliferation. Binds heparin, chondroitin sulfate and possibly other glycosaminoglycans (GAGs). Also binds specifically to pneumococcal surface protein A (PspA), the lipid A portion of bacterial lipopolysaccharide (LPS), lysozyme and DNA. Lactoferricin binds to the bacterial surface and is crucial for the bactericidal functions. Has some antiviral activity against papillomavirus infection. N-terminal region shows strong antifungal activity against C.albicans. Contains two BBXB heparin-binding consensus sequences that appear to form the predominate functional GAG-binding site. In terms of biological role, the lactotransferrin transferrin-like domain 1 functions as a serine protease of the peptidase S60 family that cuts arginine rich regions. This function contributes to the antimicrobial activity. Shows a preferential cleavage at -Arg-Ser-Arg-Arg-|- and -Arg-Arg-Ser-Arg-|-, and of Z-Phe-Arg-|-aminomethylcoumarin sites. In Bubalus bubalis (Domestic water buffalo), this protein is Lactotransferrin (LTF).